Reading from the N-terminus, the 556-residue chain is Protein F37C4.5 (556 aa).

Ala-2 carries the post-translational modification N-acetylalanine.

This is Protein F37C4.5 from Caenorhabditis elegans.